The following is a 702-amino-acid chain: Putative methyltransferase NSUN7 (702 aa).

Cys424 (nucleophile) is an active-site residue. 3 disordered regions span residues Lys522 to Ala541, Glu567 to Leu593, and Pro675 to Leu702. Residues Ser523 to Lys534 are compositionally biased toward basic residues. The span at Glu567 to Gln587 shows a compositional bias: polar residues. Residues Arg681 to Arg691 are compositionally biased toward basic and acidic residues.

This sequence belongs to the class I-like SAM-binding methyltransferase superfamily. RsmB/NOP family.

May have S-adenosyl-L-methionine-dependent methyl-transferase activity. The protein is Putative methyltransferase NSUN7 (NSUN7) of Macaca fascicularis (Crab-eating macaque).